The sequence spans 502 residues: 2-isopropylmalate synthase (502 aa).

Positions 1, 189, 191, and 225 each coordinate Mn(2+). In terms of domain architecture, Pyruvate carboxyltransferase spans 1–254 (DGEQALQASL…STNINHKEIY (254 aa)). The interval 379–502 (CLKFFSVQSI…VNKNLKNLKK (124 aa)) is regulatory domain.

The protein belongs to the alpha-IPM synthase/homocitrate synthase family. LeuA type 1 subfamily. Homodimer. The cofactor is Mn(2+).

It is found in the cytoplasm. The catalysed reaction is 3-methyl-2-oxobutanoate + acetyl-CoA + H2O = (2S)-2-isopropylmalate + CoA + H(+). Its pathway is amino-acid biosynthesis; L-leucine biosynthesis; L-leucine from 3-methyl-2-oxobutanoate: step 1/4. In terms of biological role, catalyzes the condensation of the acetyl group of acetyl-CoA with 3-methyl-2-oxobutanoate (2-ketoisovalerate) to form 3-carboxy-3-hydroxy-4-methylpentanoate (2-isopropylmalate). This chain is 2-isopropylmalate synthase, found in Buchnera aphidicola subsp. Uroleucon sonchi.